A 142-amino-acid polypeptide reads, in one-letter code: Large ribosomal subunit protein uL11 (142 aa).

Belongs to the universal ribosomal protein uL11 family. In terms of assembly, part of the ribosomal stalk of the 50S ribosomal subunit. Interacts with L10 and the large rRNA to form the base of the stalk. L10 forms an elongated spine to which L12 dimers bind in a sequential fashion forming a multimeric L10(L12)X complex. In terms of processing, one or more lysine residues are methylated.

Forms part of the ribosomal stalk which helps the ribosome interact with GTP-bound translation factors. The protein is Large ribosomal subunit protein uL11 of Haemophilus influenzae (strain PittGG).